Here is a 136-residue protein sequence, read N- to C-terminus: MIYTGIDIVAVDRIRRAVERWGDRFIQRIFSTAETALCHGRTESLAARWAAKEAVAKLLGVGLRGIGGAGGVAFHDIEALADAHGRPMVILRGAAQARARELGIDSIRLSLSHDHGLAIAIAIALSSPTPRRRMPW.

Residues Asp-7 and Glu-53 each contribute to the Mg(2+) site.

Belongs to the P-Pant transferase superfamily. AcpS family. Mg(2+) is required as a cofactor.

It localises to the cytoplasm. The enzyme catalyses apo-[ACP] + CoA = holo-[ACP] + adenosine 3',5'-bisphosphate + H(+). Its function is as follows. Transfers the 4'-phosphopantetheine moiety from coenzyme A to a Ser of acyl-carrier-protein. This chain is Holo-[acyl-carrier-protein] synthase, found in Roseiflexus castenholzii (strain DSM 13941 / HLO8).